We begin with the raw amino-acid sequence, 251 residues long: Zinc import ATP-binding protein ZnuC (251 aa).

An ABC transporter domain is found at 5 to 220; it reads VSLENVSVSF…PEFISMFGPR (216 aa). 37-44 is a binding site for ATP; sequence GPNGAGKS.

The protein belongs to the ABC transporter superfamily. Zinc importer (TC 3.A.1.15.5) family. In terms of assembly, the complex is composed of two ATP-binding proteins (ZnuC), two transmembrane proteins (ZnuB) and a solute-binding protein (ZnuA).

The protein resides in the cell inner membrane. It carries out the reaction Zn(2+)(out) + ATP(in) + H2O(in) = Zn(2+)(in) + ADP(in) + phosphate(in) + H(+)(in). Functionally, part of the ABC transporter complex ZnuABC involved in zinc import. Responsible for energy coupling to the transport system. The chain is Zinc import ATP-binding protein ZnuC from Shigella dysenteriae serotype 1 (strain Sd197).